The primary structure comprises 174 residues: Adenine phosphoribosyltransferase (174 aa).

The protein belongs to the purine/pyrimidine phosphoribosyltransferase family. Homodimer.

Its subcellular location is the cytoplasm. It carries out the reaction AMP + diphosphate = 5-phospho-alpha-D-ribose 1-diphosphate + adenine. The protein operates within purine metabolism; AMP biosynthesis via salvage pathway; AMP from adenine: step 1/1. Catalyzes a salvage reaction resulting in the formation of AMP, that is energically less costly than de novo synthesis. In Nitrosomonas europaea (strain ATCC 19718 / CIP 103999 / KCTC 2705 / NBRC 14298), this protein is Adenine phosphoribosyltransferase.